Consider the following 88-residue polypeptide: Cell division topological specificity factor (88 aa).

This sequence belongs to the MinE family.

Its function is as follows. Prevents the cell division inhibition by proteins MinC and MinD at internal division sites while permitting inhibition at polar sites. This ensures cell division at the proper site by restricting the formation of a division septum at the midpoint of the long axis of the cell. The polypeptide is Cell division topological specificity factor (Psychromonas ingrahamii (strain DSM 17664 / CCUG 51855 / 37)).